The following is a 417-amino-acid chain: Serine--tRNA ligase (417 aa).

Position 226–228 (226–228 (TSE)) interacts with L-serine. ATP-binding positions include 257–259 (RRE) and Val273. Residue Glu280 participates in L-serine binding. 344–347 (ELTS) lines the ATP pocket. Thr379 provides a ligand contact to L-serine.

It belongs to the class-II aminoacyl-tRNA synthetase family. Type-1 seryl-tRNA synthetase subfamily. In terms of assembly, homodimer. The tRNA molecule binds across the dimer.

It localises to the cytoplasm. The enzyme catalyses tRNA(Ser) + L-serine + ATP = L-seryl-tRNA(Ser) + AMP + diphosphate + H(+). It carries out the reaction tRNA(Sec) + L-serine + ATP = L-seryl-tRNA(Sec) + AMP + diphosphate + H(+). It functions in the pathway aminoacyl-tRNA biosynthesis; selenocysteinyl-tRNA(Sec) biosynthesis; L-seryl-tRNA(Sec) from L-serine and tRNA(Sec): step 1/1. In terms of biological role, catalyzes the attachment of serine to tRNA(Ser). Is also able to aminoacylate tRNA(Sec) with serine, to form the misacylated tRNA L-seryl-tRNA(Sec), which will be further converted into selenocysteinyl-tRNA(Sec). The sequence is that of Serine--tRNA ligase from Mycobacterium sp. (strain KMS).